Reading from the N-terminus, the 320-residue chain is Cytosolic Fe-S cluster assembly factor NUBP1 (320 aa).

At Met1 the chain carries N-acetylmethionine. The [4Fe-4S] cluster site is built by Cys8, Cys22, Cys25, and Cys31. 62-69 contributes to the ATP binding site; that stretch reads GKGGVGKS. Residues Cys235 and Cys238 each contribute to the [4Fe-4S] cluster site.

The protein belongs to the Mrp/NBP35 ATP-binding proteins family. NUBP1/NBP35 subfamily. As to quaternary structure, heterotetramer of 2 NUBP1 and 2 NUBP2 chains. Interacts with KIFC1. Interacts with the BBS/CCT complex subunit CCT1. Requires [4Fe-4S] cluster as cofactor.

It localises to the cytoplasm. Its subcellular location is the nucleus. It is found in the cell projection. The protein resides in the cytoskeleton. The protein localises to the cilium axoneme. It localises to the cilium basal body. Its subcellular location is the microtubule organizing center. It is found in the centrosome. The protein resides in the centriole. Functionally, component of the cytosolic iron-sulfur (Fe/S) protein assembly (CIA) machinery. Required for maturation of extramitochondrial Fe-S proteins. The NUBP1-NUBP2 heterotetramer forms a Fe-S scaffold complex, mediating the de novo assembly of an Fe-S cluster and its transfer to target apoproteins. Implicated in the regulation of centrosome duplication. Negatively regulates cilium formation and structure. The polypeptide is Cytosolic Fe-S cluster assembly factor NUBP1 (Bos taurus (Bovine)).